Consider the following 214-residue polypeptide: MKAFTQHNGLVAPLDRANVDTDQIIPKQFLKSIKRTGFGPNLFDEWRYLDVGQPYQDNSKRPLNKDFVLNAERYQGASVLLARENFGCGSSREHAPWALEEYGFRSIIAPSYADIFFNNSFKNGLLPIILSDAEVDELFQQVEATPGYQLRIDLQAQTVTRPDGKVLKFEIDAFRKHCLLNGLDDIGLTLQDGDAIAAFEAKHRASQPWLFRDA.

This sequence belongs to the LeuD family. LeuD type 1 subfamily. As to quaternary structure, heterodimer of LeuC and LeuD.

The enzyme catalyses (2R,3S)-3-isopropylmalate = (2S)-2-isopropylmalate. Its pathway is amino-acid biosynthesis; L-leucine biosynthesis; L-leucine from 3-methyl-2-oxobutanoate: step 2/4. Catalyzes the isomerization between 2-isopropylmalate and 3-isopropylmalate, via the formation of 2-isopropylmaleate. In Pseudomonas fluorescens (strain ATCC BAA-477 / NRRL B-23932 / Pf-5), this protein is 3-isopropylmalate dehydratase small subunit.